Here is a 149-residue protein sequence, read N- to C-terminus: Probable flagellum biosynthesis repressor protein FlbT (149 aa).

It belongs to the FlbT family.

In terms of biological role, has a post-transcriptional repressor function in flagellum biogenesis. Associates with the 5'-UTR of fljK mRNA and promotes its degradation. The chain is Probable flagellum biosynthesis repressor protein FlbT from Rhizobium johnstonii (strain DSM 114642 / LMG 32736 / 3841) (Rhizobium leguminosarum bv. viciae).